We begin with the raw amino-acid sequence, 185 residues long: Ribosome-recycling factor (185 aa).

This sequence belongs to the RRF family.

Its subcellular location is the cytoplasm. Its function is as follows. Responsible for the release of ribosomes from messenger RNA at the termination of protein biosynthesis. May increase the efficiency of translation by recycling ribosomes from one round of translation to another. This is Ribosome-recycling factor from Shewanella pealeana (strain ATCC 700345 / ANG-SQ1).